The chain runs to 207 residues: Ribosomal RNA small subunit methyltransferase G (207 aa).

Residues G73, L78, 124–125 (VE), and R139 contribute to the S-adenosyl-L-methionine site.

The protein belongs to the methyltransferase superfamily. RNA methyltransferase RsmG family.

Its subcellular location is the cytoplasm. It catalyses the reaction guanosine(527) in 16S rRNA + S-adenosyl-L-methionine = N(7)-methylguanosine(527) in 16S rRNA + S-adenosyl-L-homocysteine. Its function is as follows. Specifically methylates the N7 position of guanine in position 527 of 16S rRNA. The polypeptide is Ribosomal RNA small subunit methyltransferase G (Salmonella arizonae (strain ATCC BAA-731 / CDC346-86 / RSK2980)).